The primary structure comprises 759 residues: Solute carrier family 26 member 6 (759 aa).

At 1–115 (MGLADASGPR…PQGLAYALLA (115 aa)) the chain is on the cytoplasmic side. Residues 116–136 (GLPPVFGLYSSFYPVFIYFLF) form a helical membrane-spanning segment. Over 137–186 (GTSRHISVGTFAVMSVMVGSVTESLAPQALNDSMINETARDAARVQVAST) the chain is Extracellular. Residues asparagine 167 and asparagine 172 are each glycosylated (N-linked (GlcNAc) asparagine). A helical transmembrane segment spans residues 187-207 (LSVLVGLFQVGLGLIHFGFVV). Residues 208–263 (TYLSEPLVRGYTTAAAVQVFVSQLKYVFGLHLSSHSGPLSLIYTVLEVCWKLPQSK) are Cytoplasmic-facing. Residues 264 to 284 (VGTVVTAAVAGVVLVVVKLLN) traverse the membrane as a helical segment. Topologically, residues 285 to 293 (DKLQQQLPM) are extracellular. The chain crosses the membrane as a helical span at residues 294-314 (PIPGELLTLIGATGISYGMGL). Over 315–347 (KHRFEVDVVGNIPAGLVPPVAPNTQLFSKLVGS) the chain is Cytoplasmic. Residues 348 to 368 (AFTIAVVGFAIAISLGKIFAL) form a helical membrane-spanning segment. At 369–379 (RHGYRVDSNQE) the chain is on the extracellular side. The helical transmembrane segment at 380–400 (LVALGLSNLIGGIFQCFPVSC) threads the bilayer. The Cytoplasmic segment spans residues 401–416 (SMSRSLVQESTGGNSQ). Residues 417-437 (VAGAISSLFILLIIVKLGELF) form a helical membrane-spanning segment. Residues 438-484 (HDLPKAVLAAIIIVNLKGMLRQLSDMRSLWKANRADLLIWLVTFTAT) are Extracellular-facing. The chain crosses the membrane as a helical span at residues 485–505 (ILLNLDLGLVVAVIFSLLLVV). The Cytoplasmic segment spans residues 506–759 (VRTQMPHYSV…PDSPVSVTRL (254 aa)). One can recognise an STAS domain in the interval 530 to 742 (EYSEAKEVRG…ASVHDAVTFA (213 aa)). Phosphoserine; by PKC occurs at positions 553 and 582. Serine 616 is subject to Phosphoserine. Positions 636–657 (GDKMEDATANGQEDSKAPDGST) are disordered. Phosphoserine occurs at positions 752 and 755.

It belongs to the SLC26A/SulP transporter (TC 2.A.53) family. As to quaternary structure, interacts (via C-terminal domain) with PDZK1 (via C-terminal PDZ domain); the interaction induces chloride and oxalate exchange transport. Interacts with CFTR and SLC26A3. Interacts with AHCYL1; the interaction increases SLC26A6 activity. Interacts with NHERF1 (via the PDZ domains) and NHERF2 (via the PDZ domains). Interacts (via C-terminal cytoplasmic domain) with CA2; the interaction stimulates chloride-bicarbonate exchange activity. In terms of assembly, interacts with NHERF1 (via the PDZ domains) and NHERF2 (via the PDZ domains). In terms of processing, phosphorylated on serine residues by PKC; the phosphorylation disrupts interaction with carbonic anhydrase CA2 and reduces bicarbonate transport activity in a phorbol myristate acetate (PMA)-induced manner. Glycosylation at Asn-167 and Asn-172 positively regulates its chloride oxalate exchanger activity. In terms of tissue distribution, ubiquitous. Highest levels in kidney and pancreas. Lower expression in heart, skeletal muscle, liver and placenta. Also found in lung and brain. Ubiquitously expressed. Highest levels expressed in the kidney and pancreas. As to expression, expressed weakly in placenta, lung, liver and pancreas. In terms of tissue distribution, expressed in heart, brain, placenta, lung, liver, kidney, pancreas, spleen, thymus, prostate, testis and ovary.

It is found in the cell membrane. It localises to the apical cell membrane. Its subcellular location is the cytoplasmic vesicle membrane. The protein resides in the microsome. The protein localises to the basolateral cell membrane. The catalysed reaction is 2 hydrogencarbonate(in) + chloride(out) = 2 hydrogencarbonate(out) + chloride(in). It catalyses the reaction oxalate(in) + chloride(out) = oxalate(out) + chloride(in). It carries out the reaction oxalate(in) + formate(out) = oxalate(out) + formate(in). The enzyme catalyses oxalate(in) + sulfate(out) = oxalate(out) + sulfate(in). The catalysed reaction is 2 hydrogencarbonate(out) + sulfate(in) = 2 hydrogencarbonate(in) + sulfate(out). Its activity is regulated as follows. Oxalate transport activity is inhibited by 4,4'-diisothiocyanatostilbene-2,2'-disulfonic acid (DIDS). With respect to regulation, chloride, bicarbonate and sulfate transport activities are inhibited by 4,4'-diisothiocyanatostilbene-2,2'-disulfonic acid (DIDS). Functionally, apical membrane anion-exchanger with wide epithelial distribution that plays a role as a component of the pH buffering system for maintaining acid-base homeostasis. Acts as a versatile DIDS-sensitive inorganic and organic anion transporter that mediates the uptake of monovalent anions like chloride, bicarbonate, formate and hydroxyl ion and divalent anions like sulfate and oxalate. Functions in multiple exchange modes involving pairs of these anions, which include chloride-bicarbonate, chloride-oxalate, oxalate-formate, oxalate-sulfate and chloride-formate exchange. Apical membrane chloride-bicarbonate exchanger that mediates luminal chloride absorption and bicarbonate secretion by the small intestinal brush border membrane and contributes to intracellular pH regulation in the duodenal upper villous epithelium during proton-coupled peptide absorption, possibly by providing a bicarbonate import pathway. Also mediates intestinal chloride absorption and oxalate secretion, thereby preventing hyperoxaluria and calcium oxalate urolithiasis. Transepithelial oxalate secretion, chloride-formate, chloride-oxalate and chloride-bicarbonate transport activities in the duodenum are inhibited by PKC activation in a calcium-independent manner. The apical membrane chloride-bicarbonate exchanger also provides a major route for fluid and bicarbonate secretion into the proximal tubules of the kidney as well as into the proximal part of the interlobular pancreatic ductal tree, where it mediates electrogenic chloride-bicarbonate exchange with a chloride-bicarbonate stoichiometry of 1:2, and hence will dilute and alkalinize protein-rich acinar secretion. Also mediates the transcellular sulfate absorption and oxalate secretion across the apical membrane in the duodenum and the formate ion efflux at the apical brush border of cells in the proximal tubules of kidney. Plays a role in sperm capacitation by increasing intracellular pH. Apical membrane chloride-bicarbonate exchanger. Its association with carbonic anhydrase CA2 forms a bicarbonate transport metabolon; hence maximizes the local concentration of bicarbonate at the transporter site. This is Solute carrier family 26 member 6 (SLC26A6) from Homo sapiens (Human).